A 332-amino-acid chain; its full sequence is MQFALMSGLVAFLATVLLIPRFITFYQAKRIEGQQMHEDVKQHQFKAGTPTMGGTVFLVVAILVSLLFATAFQLLTGGVLAILFILALYGVVGFLDDFLKIFRKINEGLNPKQKLALQILGGIVFYFVHVRGAGGGELNVFGHMVHLGVLYFPFVLFWLVGFSNAVNLTDGIDGLASISVVISLLAYSVIAFNEQKFDILLVCVTMIGGLLGFFVYNRKPAKIFMGDVGSLALGGMLATISIALRQEWTLLLIGLVYVIETSSVMLQVSYFKYTKKRFGEGRRIFRMTPFHHHLELGGLTGKAEKWSEWKVDFFLWSVGLIMSLITLAILYL.

10 helical membrane-spanning segments follow: residues 3 to 23, 52 to 72, 74 to 94, 115 to 135, 140 to 160, 172 to 192, 197 to 217, 223 to 243, 248 to 268, and 311 to 331; these read FALMSGLVAFLATVLLIPRFI, MGGTVFLVVAILVSLLFATAF, LLTGGVLAILFILALYGVVGF, LALQILGGIVFYFVHVRGAGG, VFGHMVHLGVLYFPFVLFWLV, IDGLASISVVISLLAYSVIAF, FDILLVCVTMIGGLLGFFVYN, IFMGDVGSLALGGMLATISIA, WTLLLIGLVYVIETSSVMLQV, and VDFFLWSVGLIMSLITLAILY.

The protein belongs to the glycosyltransferase 4 family. MraY subfamily. It depends on Mg(2+) as a cofactor.

Its subcellular location is the cell membrane. It catalyses the reaction UDP-N-acetyl-alpha-D-muramoyl-L-alanyl-gamma-D-glutamyl-L-lysyl-D-alanyl-D-alanine + di-trans,octa-cis-undecaprenyl phosphate = Mur2Ac(oyl-L-Ala-gamma-D-Glu-L-Lys-D-Ala-D-Ala)-di-trans,octa-cis-undecaprenyl diphosphate + UMP. The protein operates within cell wall biogenesis; peptidoglycan biosynthesis. Catalyzes the initial step of the lipid cycle reactions in the biosynthesis of the cell wall peptidoglycan: transfers peptidoglycan precursor phospho-MurNAc-pentapeptide from UDP-MurNAc-pentapeptide onto the lipid carrier undecaprenyl phosphate, yielding undecaprenyl-pyrophosphoryl-MurNAc-pentapeptide, known as lipid I. This is Phospho-N-acetylmuramoyl-pentapeptide-transferase from Streptococcus suis (strain 98HAH33).